The sequence spans 410 residues: Protein BTN2 (410 aa).

Disordered stretches follow at residues 223 to 264 (INEP…TKED) and 276 to 410 (MQEE…IEEI). Composition is skewed to basic and acidic residues over residues 233–264 (SKIDESHDDVNMSESLKEEEAEKAKEPLTKED) and 276–311 (MQEESRKSEQEKAAKEDEERQKKEKEARLKARKESL). The stretch at 243–330 (NMSESLKEEE…QQKKLQNSKS (88 aa)) forms a coiled coil. Over residues 334-362 (SEIEASNKNNNSNSGSAESDNESINSDSD) the composition is skewed to low complexity. Residues 364–373 (TLDFSVSGNT) are compositionally biased toward polar residues.

Interacts with RHB1, IST2, TDA3 and YIF1.

It localises to the cytoplasm. The protein localises to the late endosome. V-SNARE binding protein that facilitates specific protein retrieval from a late endosome to the Golgi. Modulates the rate of arginine uptake. Involved in pH homeostasis. Required for the correct localization of IST2. May be involved in ion homeostasis together with IST2. This is Protein BTN2 (BTN2) from Saccharomyces cerevisiae (strain ATCC 204508 / S288c) (Baker's yeast).